Consider the following 686-residue polypeptide: tRNA wybutosine-synthesizing protein 4 (686 aa).

The disordered stretch occupies residues 1-22 (MGPRSRQRRTGTVQSTNDSSSL). The segment covering 10–22 (TGTVQSTNDSSSL) has biased composition (polar residues). S-adenosyl-L-methionine is bound by residues Arg-59, Gly-89, Asp-114, 161-162 (DL), and Glu-188.

It belongs to the methyltransferase superfamily. LCMT family. Interacts with RNF144B/IBRDC2.

The enzyme catalyses 7-[(3S)-3-amino-3-carboxypropyl]wyosine(37) in tRNA(Phe) + S-adenosyl-L-methionine = 7-[(3S)-(3-amino-3-methoxycarbonyl)propyl]wyosine(37) in tRNA(Phe) + S-adenosyl-L-homocysteine. It carries out the reaction 7-[(3S)-(3-amino-3-methoxycarbonyl)propyl]wyosine(37) in tRNA(Phe) + S-adenosyl-L-methionine + CO2 = wybutosine(37) in tRNA(Phe) + S-adenosyl-L-homocysteine + 2 H(+). The protein operates within tRNA modification; wybutosine-tRNA(Phe) biosynthesis. Its function is as follows. Probable S-adenosyl-L-methionine-dependent methyltransferase that acts as a component of the wybutosine biosynthesis pathway. Wybutosine is a hyper modified guanosine with a tricyclic base found at the 3'-position adjacent to the anticodon of eukaryotic phenylalanine tRNA. May methylate the carboxyl group of leucine residues to form alpha-leucine ester residues. In Rattus norvegicus (Rat), this protein is tRNA wybutosine-synthesizing protein 4 (Lcmt2).